The primary structure comprises 663 residues: Polyunsaturated fatty acid lipoxygenase ALOX15 (663 aa).

Residues 2–115 (GLYRVRVSTG…ILSLPEGTGR (114 aa)) enclose the PLAT domain. A Lipoxygenase domain is found at 116 to 663 (TVVDDPQGLF…PSLVENSVAI (548 aa)). His-361, His-366, His-541, His-545, and Ile-663 together coordinate Fe cation.

It belongs to the lipoxygenase family. As to quaternary structure, interacts with PEBP1; in response to IL13/interleukin-13, prevents the interaction of PEBP1 with RAF1 to activate the ERK signaling cascade. Requires Fe cation as cofactor. Detected in tracheal epithelium.

The protein resides in the cytoplasm. Its subcellular location is the cytosol. The protein localises to the cell membrane. It localises to the lipid droplet. It catalyses the reaction (5Z,8Z,11Z,14Z)-eicosatetraenoate + O2 = (12S)-hydroperoxy-(5Z,8Z,10E,14Z)-eicosatetraenoate. The enzyme catalyses (5Z,8Z,11Z,14Z)-eicosatetraenoate + O2 = (15S)-hydroperoxy-(5Z,8Z,11Z,13E)-eicosatetraenoate. The catalysed reaction is (9Z,12Z)-octadecadienoate + O2 = (13S)-hydroperoxy-(9Z,11E)-octadecadienoate. It carries out the reaction (5Z,8Z,11Z,14Z)-eicosatetraenoate + 2 O2 = (14R,15S)-dihydroperoxy-(5Z,8Z,10E,12E)-eicosatetraenoate. It catalyses the reaction (5Z,8Z,11Z,14Z)-eicosatetraenoate + 2 O2 = (8S,15S)-dihydroperoxy-(5Z,9E,11Z,13E)-eicosatetraenoate. The enzyme catalyses (14S,15R)-epoxy-(5Z,8Z,11Z)-eicosatrienoate + O2 = (8S)-hydroperoxy-(14S,15R)-epoxy-(5Z,9E,11Z)-eicosatrienoate. The catalysed reaction is (14S,15R)-epoxy-(5Z,8Z,11Z)-eicosatrienoate + O2 = (12S)-hydroperoxy-(14S,15R)-epoxy-(5Z,8Z,10E)-eicosatrienoate. It carries out the reaction (14R,15S)-epoxy-(5Z,8Z,11Z)-eicosatrienoate + O2 = (5S)-hydroperoxy-(14R,15S)-epoxy-(6E,8Z,11Z)-eicosatrienoate. It catalyses the reaction (14R,15S)-epoxy-(5Z,8Z,11Z)-eicosatrienoate + O2 = (12S)-hydroperoxy-(14R,15S)-epoxy-(5Z,8Z,10E)-eicosatrienoate. The enzyme catalyses (15R)-hydroperoxy-(5Z,8Z,11Z,13E)-eicosatetraenoate = 15-oxo-(5Z,8Z,11Z,13E)-eicosatetraenoate + H2O. The catalysed reaction is (15S)-hydroperoxy-(5Z,8Z,11Z,13E)-eicosatetraenoate = (14S,15S)-epoxy-(5Z,8Z,10E,12E)-eicosatetraenoate + H2O. It carries out the reaction (12S)-hydroperoxy-(5Z,8Z,10E,14Z)-eicosatetraenoate = (8S)-hydroxy-(11S,12S)-epoxy-(5Z,9E,14Z)-eicosatrienoate. It catalyses the reaction (4Z,7Z,10Z,13Z,16Z)-docosapentaenoate + O2 = 14-hydroperoxy-(4Z,7Z,10Z,12E,16Z)-docosapentaenoate. The enzyme catalyses (7Z,10Z,13Z,16Z,19Z)-docosapentaenoate + O2 = 14-hydroperoxy-(7Z,10Z,12E,16Z,19Z)-docosapentaenoate. The catalysed reaction is (4Z,7Z,10Z,13Z,16Z,19Z)-docosahexaenoate + O2 = (14S)-hydroperoxy-(4Z,7Z,10Z,12E,16Z,19Z)-docosahexaenoate. It carries out the reaction (4Z,7Z,10Z,13Z,16Z,19Z)-docosahexaenoate + O2 = (17S)-hydroperoxy-(4Z,7Z,10Z,13Z,15E,19Z)-docosahexaenoate. It catalyses the reaction (7S)-hydroperoxy-(4Z,8E,10Z,13Z,16Z,19Z)-docosahexaenoate + O2 = (7S,14S)-dihydroperoxy-(4Z,8E,10Z,12E,16Z,19Z)-docosahexaenoate. The enzyme catalyses (7S)-hydroperoxy-(4Z,8E,10Z,13Z,16Z,19Z)-docosahexaenoate + O2 = (7S,17S)-dihydroperoxy-(4Z,8E,10Z,13Z,15E,19Z)-docosahexaenoate. The catalysed reaction is (4Z,7Z,10Z,13Z,16Z,19Z)-docosahexaenoate + O2 = (11S)-hydroperoxy-(4Z,7Z,9E,13Z,16Z,19Z)-docosahexaenoate. It carries out the reaction N-(5Z,8Z,11Z,14Z)-eicosatetraenoyl-taurine + O2 = N-(12S)-hydroperoxy-(5Z,8Z,10E,14Z)-eicosatetraenoyl-taurine. It catalyses the reaction N-(5Z,8Z,11Z,14Z)-eicosatetraenoyl-gamma-aminobutanoate + O2 = N-(12S)-hydroperoxy-(5Z,8Z,10E,14Z)-eicosatetraenoyl-gamma-aminobutanoate. The enzyme catalyses N-(5Z,8Z,11Z,14Z)-eicosatetraenoyl-glycine + O2 = N-(12S)-hydroperoxy-(5Z,8Z,10E,14Z)-eicosatetraenoyl-glycine. The catalysed reaction is N-(5Z,8Z,11Z,14Z)-eicosatetraenoyl-L-alanine + O2 = N-(12S)-hydroperoxy-(5Z,8Z,10E,14Z)-eicosatetraenoyl-alanine. It carries out the reaction N-(5Z,8Z,11Z,14Z)-eicosatetraenoyl-taurine + O2 = N-(15S)-hydroperoxy-(5Z,8Z,11Z,13E)-eicosatetraenoyl-taurine. It catalyses the reaction N-(5Z,8Z,11Z,14Z)-eicosatetraenoyl-gamma-aminobutanoate + O2 = N-(15S)-hydroperoxy-(5Z,8Z,11Z,13E)-eicosatetraenoyl-gamma-aminobutanoate. The enzyme catalyses N-(5Z,8Z,11Z,14Z)-eicosatetraenoyl-glycine + O2 = N-(15S)-hydroperoxy-(5Z,8Z,11Z,13E)-eicosatetraenoyl-glycine. The catalysed reaction is N-(5Z,8Z,11Z,14Z)-eicosatetraenoyl-L-alanine + O2 = N-(15S)-hydroperoxy-(5Z,8Z,11Z,13E)-eicosatetraenoyl-alanine. Its pathway is lipid metabolism; hydroperoxy eicosatetraenoic acid biosynthesis. Functionally, non-heme iron-containing dioxygenase that catalyzes the stereo-specific peroxidation of free and esterified polyunsaturated fatty acids generating a spectrum of bioactive lipid mediators. It inserts peroxyl groups at C12 or C15 of arachidonate ((5Z,8Z,11Z,14Z)-eicosatetraenoate) producing both 12-hydroperoxyeicosatetraenoate/12-HPETE and 15-hydroperoxyeicosatetraenoate/15-HPETE. It may then act on 12-HPETE to produce hepoxilins, which may show pro-inflammatory properties. Can also peroxidize linoleate ((9Z,12Z)-octadecadienoate) to 13-hydroperoxyoctadecadienoate. May participate in the sequential oxidations of DHA ((4Z,7Z,10Z,13Z,16Z,19Z)-docosahexaenoate) to generate specialized pro-resolving mediators (SPMs)like resolvin D5 ((7S,17S)-diHPDHA) and (7S,14S)-diHPDHA, that actively down-regulate the immune response and have anti-aggregation properties with platelets. Can convert epoxy fatty acids to hydroperoxy-epoxides derivatives followed by an intramolecular nucleophilic substitution leading to the formation of monocyclic endoperoxides. Plays an important role during the maintenance of self-tolerance by peroxidizing membrane-bound phosphatidylethanolamine which can then signal the sorting process for clearance of apoptotic cells during inflammation and prevent an autoimmune response. In addition to its role in the immune and inflammatory responses, this enzyme may play a role in epithelial wound healing in the cornea through production of lipoxin A4 (LXA(4)) and docosahexaenoic acid-derived neuroprotectin D1 (NPD1; 10R,17S-HDHA), both lipid autacoids exhibit anti-inflammatory and neuroprotective properties. Furthermore, it may regulate actin polymerization which is crucial for several biological processes such as the phagocytosis of apoptotic cells. It is also implicated in the generation of endogenous ligands for peroxisome proliferator activated receptor (PPAR-gamma), hence modulating macrophage development and function. It may also exert a negative effect on skeletal development by regulating bone mass through this pathway. As well as participates in ER stress and downstream inflammation in adipocytes, pancreatic islets, and liver. Finally, it is also involved in the cellular response to IL13/interleukin-13. The chain is Polyunsaturated fatty acid lipoxygenase ALOX15 from Bos taurus (Bovine).